The sequence spans 249 residues: DNA repair protein RecO (249 aa).

It belongs to the RecO family.

In terms of biological role, involved in DNA repair and RecF pathway recombination. The protein is DNA repair protein RecO of Mycoplasma capricolum subsp. capricolum (strain California kid / ATCC 27343 / NCTC 10154).